A 368-amino-acid polypeptide reads, in one-letter code: MQPGSSRCEEETPSLLWGLDPVFLAFAKLYIRDILDMKESRQVPGVFLYNGHPIKQVDVLGTVIGVRERDAFYSYGVDDSTGVINCICWKKLNTESVSAAPSAARELSLTSQLKKLQETIEQKTKIEIGDTIRVRGSIRTYREEREIHATTYYKVDDPVWNIQIARMLELPTIYRKVYDQPFHSSALEKEEALSNPGALDLPSLTSLLSEKAKEFLMENRVQSFYQQELEMVESLLSLANQPVIHSASSDQVNFKKDTTSKAIHSIFKNAIQLLQEKGLVFQKDDGFDNLYYVTREDKDLHRKIHRIIQQDCQKPNHMEKGCHFLHILACARLSIRPGLSEAVLQQVLELLEDQSDIVSTMEHYYTAF.

An interaction with CTC1 region spans residues 1–185; the sequence is MQPGSSRCEE…KVYDQPFHSS (185 aa). The OB DNA-binding region spans 57-155; sequence VDVLGTVIGV…EIHATTYYKV (99 aa). 2 winged helix-turn-helix (wHTH) regions span residues 191-295 and 296-368; these read EALS…YVTR and EDKD…YTAF.

This sequence belongs to the STN1 family. In terms of assembly, component of the CST complex, composed of TEN1/C17orf106, CTC1/C17orf68 and STN1; in the complex interacts directly with TEN1 and CTC1. Interacts with ACD/TPP1, POT1 and POLA1.

Its subcellular location is the nucleus. The protein resides in the chromosome. It is found in the telomere. Functionally, component of the CST complex proposed to act as a specialized replication factor promoting DNA replication under conditions of replication stress or natural replication barriers such as the telomere duplex. The CST complex binds single-stranded DNA with high affinity in a sequence-independent manner, while isolated subunits bind DNA with low affinity by themselves. Initially the CST complex has been proposed to protect telomeres from DNA degradation. However, the CST complex has been shown to be involved in several aspects of telomere replication. The CST complex inhibits telomerase and is involved in telomere length homeostasis; it is proposed to bind to newly telomerase-synthesized 3' overhangs and to terminate telomerase action implicating the association with the ACD:POT1 complex thus interfering with its telomerase stimulation activity. The CST complex is also proposed to be involved in fill-in synthesis of the telomeric C-strand probably implicating recruitment and activation of DNA polymerase alpha. The CST complex facilitates recovery from many forms of exogenous DNA damage; seems to be involved in the re-initiation of DNA replication at repaired forks and/or dormant origins. Required for efficicient replication of the duplex region of the telomere. Promotes efficient replication of lagging-strand telomeres. Promotes general replication start following replication-fork stalling implicating new origin firing. May be in involved in C-strand fill-in during late S/G2 phase independent of its role in telomere duplex replication. In terms of biological role, component of the CST complex, a complex that binds to single-stranded DNA and is required to protect telomeres from DNA degradation. The CST complex binds single-stranded DNA with high affinity in a sequence-independent manner, while isolated subunits bind DNA with low affinity by themselves. In addition to telomere protection, the CST complex has probably a more general role in DNA metabolism at non-telomeric sites. This Homo sapiens (Human) protein is CST complex subunit STN1.